The primary structure comprises 142 residues: MTDLQMEVEVDTNSSLQESLPKPQVMYRCKKCRRIVAIEENIVPHEPGKGEECFAWKKRSGNSEQVQCSSIFVEPMKWMQTIHDGMVEEKLLCFGCNGRLGYFNWAGMQCSCGAWVNPAFQLNKSRIDECKSEPNPNLNMET.

The protein belongs to the protein-tyrosine phosphatase family. Non-receptor class dual specificity subfamily.

This Arabidopsis thaliana (Mouse-ear cress) protein is Probable inactive dual specificity protein phosphatase-like At4g18593.